A 91-amino-acid chain; its full sequence is Cell division protein ZapA (91 aa).

Residues 59 to 86 (TAVNIANEYLKLKEEYDRLAAKLRREKG) are a coiled coil.

The protein belongs to the ZapA family. Type 2 subfamily. Homodimer. Interacts with FtsZ.

The protein resides in the cytoplasm. Its function is as follows. Activator of cell division through the inhibition of FtsZ GTPase activity, therefore promoting FtsZ assembly into bundles of protofilaments necessary for the formation of the division Z ring. It is recruited early at mid-cell but it is not essential for cell division. The protein is Cell division protein ZapA of Geobacillus thermodenitrificans (strain NG80-2).